The chain runs to 161 residues: Probable K(+)/H(+) antiporter subunit E (161 aa).

Helical transmembrane passes span 4-21 (WFPY…WLLL) and 28-50 (GSIV…LQPA).

It belongs to the CPA3 antiporters (TC 2.A.63) subunit E family. May form a hetero-oligomeric complex that consists of six subunits: PhaAB, PhaC, PhaD, PhaE, PhaF and PhaG.

It localises to the cell membrane. Its function is as follows. Part of a K(+) efflux system which is required for the adaptation of R.meliloti to alkaline pH as well as for the infection process during symbiotic nodule development. The sequence is that of Probable K(+)/H(+) antiporter subunit E (phaE) from Rhizobium meliloti (strain 1021) (Ensifer meliloti).